We begin with the raw amino-acid sequence, 502 residues long: T-complex protein 11-like X-linked protein 2 (502 aa).

A disordered region spans residues 1–36 (MPKTEETVLQNDPSVAENGAPEPKTPGQSQKSKSFC).

It belongs to the TCP11 family.

This chain is T-complex protein 11-like X-linked protein 2, found in Homo sapiens (Human).